Here is an 83-residue protein sequence, read N- to C-terminus: Small ribosomal subunit protein uS17c (83 aa).

This sequence belongs to the universal ribosomal protein uS17 family. In terms of assembly, part of the 30S ribosomal subunit.

The protein resides in the plastid. It is found in the chloroplast. Functionally, one of the primary rRNA binding proteins, it binds specifically to the 5'-end of 16S ribosomal RNA. This Porphyra purpurea (Red seaweed) protein is Small ribosomal subunit protein uS17c (rps17).